Here is a 720-residue protein sequence, read N- to C-terminus: Biotin biosynthesis bifunctional protein BioWF (720 aa).

The tract at residues 1–39 (MRFSIKMRASARVSSSPSTSDGSSGDHTESRDRADRHIS) is disordered. Over residues 8 to 23 (RASARVSSSPSTSDGS) the composition is skewed to low complexity. A compositionally biased stretch (basic and acidic residues) spans 24–39 (SGDHTESRDRADRHIS). Substrate is bound at residue Arg314. 401-402 (GY) serves as a coordination point for pyridoxal 5'-phosphate. Substrate is bound at residue His439. Pyridoxal 5'-phosphate is bound by residues Ser488, 513 to 516 (DDAH), and 564 to 567 (TASK). An N6-(pyridoxal phosphate)lysine modification is found at Lys567. Residue Thr684 coordinates substrate.

In the N-terminal section; belongs to the BioW family. This sequence in the C-terminal section; belongs to the class-II pyridoxal-phosphate-dependent aminotransferase family. BioF subfamily. Homodimer. The cofactor is Mg(2+). Requires pyridoxal 5'-phosphate as cofactor.

It catalyses the reaction heptanedioate + ATP + CoA = 6-carboxyhexanoyl-CoA + AMP + diphosphate. The enzyme catalyses 6-carboxyhexanoyl-[ACP] + L-alanine + H(+) = (8S)-8-amino-7-oxononanoate + holo-[ACP] + CO2. It functions in the pathway metabolic intermediate metabolism; pimeloyl-CoA biosynthesis; pimeloyl-CoA from pimelate: step 1/1. The protein operates within cofactor biosynthesis; biotin biosynthesis. Functionally, catalyzes both the decarboxylative condensation of pimeloyl-[acyl-carrier protein] and L-alanine to produce 8-amino-7-oxononanoate (AON), [acyl-carrier protein], and carbon dioxide, and the transformation of pimelate into pimeloyl-CoA with concomitant hydrolysis of ATP to AMP. The polypeptide is Biotin biosynthesis bifunctional protein BioWF (bioWF) (Corynebacterium kroppenstedtii (strain DSM 44385 / JCM 11950 / CIP 105744 / CCUG 35717)).